Here is a 539-residue protein sequence, read N- to C-terminus: ATP synthase subunit beta (539 aa).

Residues 1-44 are disordered; that stretch reads MAKTPAEKPATAAKKPAAPKAAAAPKAAAAKAPAAAKAPAAKKP. Residue 212–219 participates in ATP binding; the sequence is GGAGVGKT.

Belongs to the ATPase alpha/beta chains family. In terms of assembly, F-type ATPases have 2 components, CF(1) - the catalytic core - and CF(0) - the membrane proton channel. CF(1) has five subunits: alpha(3), beta(3), gamma(1), delta(1), epsilon(1). CF(0) has three main subunits: a(1), b(2) and c(9-12). The alpha and beta chains form an alternating ring which encloses part of the gamma chain. CF(1) is attached to CF(0) by a central stalk formed by the gamma and epsilon chains, while a peripheral stalk is formed by the delta and b chains.

The protein resides in the cell inner membrane. It carries out the reaction ATP + H2O + 4 H(+)(in) = ADP + phosphate + 5 H(+)(out). Produces ATP from ADP in the presence of a proton gradient across the membrane. The catalytic sites are hosted primarily by the beta subunits. The sequence is that of ATP synthase subunit beta from Caulobacter vibrioides (strain ATCC 19089 / CIP 103742 / CB 15) (Caulobacter crescentus).